The primary structure comprises 443 residues: 26S proteasome regulatory subunit rpn501 (443 aa).

Ser209 carries the phosphoserine modification. Residues 230–402 form the PCI domain; the sequence is DVCKYYRAVY…QVISFKKSQN (173 aa).

This sequence belongs to the proteasome subunit p55 family.

The protein resides in the nucleus. Its function is as follows. Acts as a regulatory subunit of the 26S proteasome which is involved in the ATP-dependent degradation of ubiquitinated proteins. Required for proper proteasome assembly. This is 26S proteasome regulatory subunit rpn501 (rpn501) from Schizosaccharomyces pombe (strain 972 / ATCC 24843) (Fission yeast).